The following is a 166-amino-acid chain: Short form salivary protein D7R5 (166 aa).

Residues 1–22 (MEWRYFVVIALICPLIIVETLA) form the signal peptide. Cystine bridges form between cysteine 26–cysteine 58, cysteine 39–cysteine 166, and cysteine 98–cysteine 117.

Belongs to the PBP/GOBP family.

Its subcellular location is the secreted. Its function is as follows. In contrast to the related D7 salivary proteins, does not bind biogenic amines such as serotonin, noradrenaline, histamine and adrenaline. It is hypothesized that either D7r5 evolved an as yet unknown function or is becoming a pseudogene. In Anopheles gambiae (African malaria mosquito), this protein is Short form salivary protein D7R5.